We begin with the raw amino-acid sequence, 303 residues long: Cytosolic-abundant heat soluble protein 3 (303 aa).

A compositionally biased stretch (low complexity) spans M1–Q19. Residues M1–E67 form a disordered region. A coiled-coil region spans residues A170 to N257. 2 CAHS motif regions span residues Y184 to Q202 and Q221 to E239. The span at K270–S280 shows a compositional bias: polar residues. The disordered stretch occupies residues K270–R303. A compositionally biased stretch (low complexity) spans T282–T291. Positions K294–R303 are enriched in basic and acidic residues.

It belongs to the Cytosolic-abundant heat soluble protein (CAHS) family.

The protein localises to the cytoplasm. Its function is as follows. CAHS proteins are cytosolic heat soluble proteins that seem to contribute to the anhydrobiosis in tardigrades, but their specific mechanisms are yet to be identified. It is possible that protection during anhydrobiosis might occur via the stabilization of vitrifying small molecules such as sugars, but not via the direct glass transition of CAHS proteins themselves. The protein is Cytosolic-abundant heat soluble protein 3 of Ramazzottius varieornatus (Water bear).